The chain runs to 307 residues: Oligopeptide transport ATP-binding protein OppF (307 aa).

One can recognise an ABC transporter domain in the interval 6–251; the sequence is VEVKDLEISF…PIHPYTQSLL (246 aa). 42–49 is a binding site for ATP; sequence GESGSGKT.

This sequence belongs to the ABC transporter superfamily. In terms of assembly, the complex is composed of two ATP-binding proteins (OppD and OppF), two transmembrane proteins (OppB and OppC) and a solute-binding protein (OppA).

It is found in the cell membrane. The catalysed reaction is a [peptide](out) + ATP + H2O = a [peptide](in) + ADP + phosphate + H(+). In terms of biological role, part of the ABC transporter complex OppABCDF involved in the uptake of oligopeptides. Probably responsible for energy coupling to the transport system. In Streptococcus pyogenes serotype M1, this protein is Oligopeptide transport ATP-binding protein OppF (oppF).